A 310-amino-acid chain; its full sequence is tRNA uridine(34) hydroxylase (310 aa).

Residues 127-225 form the Rhodanese domain; sequence KDKDTIVIDT…YLEDISKEES (99 aa). Cys-185 serves as the catalytic Cysteine persulfide intermediate.

It belongs to the TrhO family.

The catalysed reaction is uridine(34) in tRNA + AH2 + O2 = 5-hydroxyuridine(34) in tRNA + A + H2O. Its function is as follows. Catalyzes oxygen-dependent 5-hydroxyuridine (ho5U) modification at position 34 in tRNAs. The chain is tRNA uridine(34) hydroxylase from Prochlorococcus marinus (strain MIT 9515).